The following is a 75-amino-acid chain: Protein P8 (75 aa).

A disordered region spans residues proline 19–glycine 47. Over residues isoleucine 26–glutamine 39 the composition is skewed to polar residues. A helical membrane pass occupies residues asparagine 55–isoleucine 72.

It is found in the virion membrane. This chain is Protein P8 (VIII), found in Pseudoalteromonas phage PM2 (Bacteriophage PM2).